We begin with the raw amino-acid sequence, 150 residues long: Large ribosomal subunit protein bL9 (150 aa).

This sequence belongs to the bacterial ribosomal protein bL9 family.

In terms of biological role, binds to the 23S rRNA. The chain is Large ribosomal subunit protein bL9 from Burkholderia ambifaria (strain MC40-6).